The following is a 256-amino-acid chain: DNA repair protein RecO (256 aa).

This sequence belongs to the RecO family.

Involved in DNA repair and RecF pathway recombination. The sequence is that of DNA repair protein RecO from Streptococcus pneumoniae (strain Hungary19A-6).